A 509-amino-acid chain; its full sequence is ATP synthase subunit alpha (509 aa).

169–176 (GDRQTGKT) is a binding site for ATP.

Belongs to the ATPase alpha/beta chains family. In terms of assembly, F-type ATPases have 2 components, CF(1) - the catalytic core - and CF(0) - the membrane proton channel. CF(1) has five subunits: alpha(3), beta(3), gamma(1), delta(1), epsilon(1). CF(0) has three main subunits: a(1), b(2) and c(9-12). The alpha and beta chains form an alternating ring which encloses part of the gamma chain. CF(1) is attached to CF(0) by a central stalk formed by the gamma and epsilon chains, while a peripheral stalk is formed by the delta and b chains.

It is found in the cell inner membrane. The catalysed reaction is ATP + H2O + 4 H(+)(in) = ADP + phosphate + 5 H(+)(out). Functionally, produces ATP from ADP in the presence of a proton gradient across the membrane. The alpha chain is a regulatory subunit. The polypeptide is ATP synthase subunit alpha (Rhizobium johnstonii (strain DSM 114642 / LMG 32736 / 3841) (Rhizobium leguminosarum bv. viciae)).